The chain runs to 295 residues: Ethanolamine ammonia-lyase small subunit (295 aa).

Adenosylcob(III)alamin-binding residues include V207, E228, and C258.

It belongs to the EutC family. As to quaternary structure, the basic unit is a heterodimer which dimerizes to form tetramers. The heterotetramers trimerize; 6 large subunits form a core ring with 6 small subunits projecting outwards. The cofactor is adenosylcob(III)alamin.

Its subcellular location is the bacterial microcompartment. The enzyme catalyses ethanolamine = acetaldehyde + NH4(+). It participates in amine and polyamine degradation; ethanolamine degradation. Functionally, catalyzes the deamination of various vicinal amino-alcohols to oxo compounds. Allows this organism to utilize ethanolamine as the sole source of nitrogen and carbon in the presence of external vitamin B12. The polypeptide is Ethanolamine ammonia-lyase small subunit (Escherichia coli (strain SE11)).